A 123-amino-acid polypeptide reads, in one-letter code: Ribonuclease P protein component (123 aa).

This sequence belongs to the RnpA family. As to quaternary structure, consists of a catalytic RNA component (M1 or rnpB) and a protein subunit.

It catalyses the reaction Endonucleolytic cleavage of RNA, removing 5'-extranucleotides from tRNA precursor.. Functionally, RNaseP catalyzes the removal of the 5'-leader sequence from pre-tRNA to produce the mature 5'-terminus. It can also cleave other RNA substrates such as 4.5S RNA. The protein component plays an auxiliary but essential role in vivo by binding to the 5'-leader sequence and broadening the substrate specificity of the ribozyme. This Streptococcus pneumoniae (strain Hungary19A-6) protein is Ribonuclease P protein component.